A 409-amino-acid polypeptide reads, in one-letter code: NADH-quinone oxidoreductase subunit D (409 aa).

This sequence belongs to the complex I 49 kDa subunit family. NDH-1 is composed of 14 different subunits. Subunits NuoB, C, D, E, F, and G constitute the peripheral sector of the complex.

The protein localises to the cell inner membrane. The catalysed reaction is a quinone + NADH + 5 H(+)(in) = a quinol + NAD(+) + 4 H(+)(out). In terms of biological role, NDH-1 shuttles electrons from NADH, via FMN and iron-sulfur (Fe-S) centers, to quinones in the respiratory chain. The immediate electron acceptor for the enzyme in this species is believed to be ubiquinone. Couples the redox reaction to proton translocation (for every two electrons transferred, four hydrogen ions are translocated across the cytoplasmic membrane), and thus conserves the redox energy in a proton gradient. The chain is NADH-quinone oxidoreductase subunit D from Campylobacter curvus (strain 525.92).